We begin with the raw amino-acid sequence, 307 residues long: Trehalose transport system permease protein SugA (307 aa).

A run of 6 helical transmembrane segments spans residues 25-45, 89-109, 123-143, 168-188, 217-237, and 272-292; these read LAFMLVAPAAMLMVAVTAYPI, LAITAVSVTIEFVLGLALALV, AVLIPYGIVTVVASYSWYYAW, LGIVVIAEVWKTTPFMSLLLL, ILPMIKPAIVVALLFRTLDAF, and LGSAISVLIFGCVAVIAFIFI. The region spanning 85 to 291 is the ABC transmembrane type-1 domain; sequence LAVTLAITAV…GCVAVIAFIF (207 aa).

Belongs to the binding-protein-dependent transport system permease family. As to quaternary structure, the complex is composed of two ATP-binding proteins (SugC), two transmembrane proteins (Suga and SugB) and a solute-binding protein (LpqY).

It is found in the cell inner membrane. Functionally, part of the ABC transporter complex LpqY-SugA-SugB-SugC, which is highly specific for uptake of trehalose. Involved in the recycling of extracellular trehalose released from trehalose-containing molecules synthesized by M.tuberculosis. Trehalose uptake is essential for virulence. Probably responsible for the translocation of the substrate across the membrane. The chain is Trehalose transport system permease protein SugA (sugA) from Mycobacterium tuberculosis (strain CDC 1551 / Oshkosh).